The sequence spans 110 residues: Phosphoribosyl-ATP pyrophosphatase (110 aa).

Belongs to the PRA-PH family.

Its subcellular location is the cytoplasm. It catalyses the reaction 1-(5-phospho-beta-D-ribosyl)-ATP + H2O = 1-(5-phospho-beta-D-ribosyl)-5'-AMP + diphosphate + H(+). Its pathway is amino-acid biosynthesis; L-histidine biosynthesis; L-histidine from 5-phospho-alpha-D-ribose 1-diphosphate: step 2/9. This Pseudomonas fluorescens (strain SBW25) protein is Phosphoribosyl-ATP pyrophosphatase.